Reading from the N-terminus, the 274-residue chain is Large ribosomal subunit protein uL2 (274 aa).

2 disordered regions span residues Ala-28–Ile-54 and Val-224–Lys-274. A compositionally biased stretch (basic and acidic residues) spans Lys-263–Lys-274.

The protein belongs to the universal ribosomal protein uL2 family. In terms of assembly, part of the 50S ribosomal subunit. Forms a bridge to the 30S subunit in the 70S ribosome.

One of the primary rRNA binding proteins. Required for association of the 30S and 50S subunits to form the 70S ribosome, for tRNA binding and peptide bond formation. It has been suggested to have peptidyltransferase activity; this is somewhat controversial. Makes several contacts with the 16S rRNA in the 70S ribosome. The polypeptide is Large ribosomal subunit protein uL2 (Pseudomonas syringae pv. tomato (strain ATCC BAA-871 / DC3000)).